A 587-amino-acid polypeptide reads, in one-letter code: Glutaconyl-CoA decarboxylase subunit alpha (587 aa).

The CoA carboxyltransferase N-terminal domain maps to 31–298 (LKKIEEEIHQ…YDPEFFRVDD (268 aa)). Positions 31–558 (LKKIEEEIHQ…RGYVEAFTEA (528 aa)) are carboxyltransferase. The region spanning 295–558 (RVDDPKAPAF…RGYVEAFTEA (264 aa)) is the CoA carboxyltransferase C-terminal domain.

As to quaternary structure, heterooctamer consisting of two alpha, two beta, two gamma and two delta subunits.

The catalysed reaction is (2E)-glutaconyl-CoA + Na(+)(in) + H(+) = (2E)-butenoyl-CoA + Na(+)(out) + CO2. It participates in amino-acid degradation; L-glutamate degradation via hydroxyglutarate pathway; crotonoyl-CoA from L-glutamate: step 5/5. Its function is as follows. Decarboxylase subunit of the primary sodium pump glutaconyl-CoA decarboxylase (GCD). This chain is Glutaconyl-CoA decarboxylase subunit alpha (gcdA), found in Acidaminococcus fermentans (strain ATCC 25085 / DSM 20731 / CCUG 9996 / CIP 106432 / VR4).